A 205-amino-acid polypeptide reads, in one-letter code: MPIFFYLFTTLIIISSLCVVLSKNSVYSVLWLIFAFINGSGLMILLGAEFLAMMLIVIYVGAVAVLFLFVIMMLDMHFNKAIMQLKEKPILSIFVSLIMFADLVVIILLGTKNIHFSSDLSFAIASDVSNTKAIGKILYTDFMIPFQIAGLILFVAMIGCITLTLRKRDGVKRQNIAKQLSHNKENAVLMTKPLINKGIENIKYE.

Helical transmembrane passes span 1–21, 26–46, 54–74, 89–109, and 142–162; these read MPIF…CVVL, VYSV…MILL, MLIV…IMML, PILS…IILL, and FMIP…GCIT.

This sequence belongs to the complex I subunit 6 family.

The protein resides in the cell membrane. It carries out the reaction a quinone + NADH + 5 H(+)(in) = a quinol + NAD(+) + 4 H(+)(out). NDH-1 shuttles electrons from NADH, via FMN and iron-sulfur (Fe-S) centers, to quinones in the respiratory chain. Couples the redox reaction to proton translocation (for every two electrons transferred, four hydrogen ions are translocated across the cytoplasmic membrane), and thus conserves the redox energy in a proton gradient. The protein is NADH-quinone oxidoreductase subunit J (nuoJ) of Rickettsia bellii (strain RML369-C).